Here is a 462-residue protein sequence, read N- to C-terminus: ATP synthase subunit beta (462 aa).

151-158 provides a ligand contact to ATP; the sequence is GGAGVGKT.

Belongs to the ATPase alpha/beta chains family. As to quaternary structure, F-type ATPases have 2 components, CF(1) - the catalytic core - and CF(0) - the membrane proton channel. CF(1) has five subunits: alpha(3), beta(3), gamma(1), delta(1), epsilon(1). CF(0) has three main subunits: a(1), b(2) and c(9-12). The alpha and beta chains form an alternating ring which encloses part of the gamma chain. CF(1) is attached to CF(0) by a central stalk formed by the gamma and epsilon chains, while a peripheral stalk is formed by the delta and b chains.

It is found in the cell inner membrane. The enzyme catalyses ATP + H2O + 4 H(+)(in) = ADP + phosphate + 5 H(+)(out). Its function is as follows. Produces ATP from ADP in the presence of a proton gradient across the membrane. The catalytic sites are hosted primarily by the beta subunits. The chain is ATP synthase subunit beta from Chlorobaculum parvum (strain DSM 263 / NCIMB 8327) (Chlorobium vibrioforme subsp. thiosulfatophilum).